Reading from the N-terminus, the 663-residue chain is MAU2 chromatid cohesion factor homolog (663 aa).

2 TPR repeats span residues 455–488 and 495–528; these read GGFY…ANAE and SCSL…ASKI.

Belongs to the SCC4/mau-2 family. In terms of assembly, interacts with Nipped-B to form the cohesin loading complex.

Its subcellular location is the nucleus. It localises to the nucleoplasm. Its function is as follows. Required for association of the cohesin complex with chromatin during interphase. Plays a role in sister chromatid cohesion and normal progression through prometaphase. This chain is MAU2 chromatid cohesion factor homolog, found in Drosophila willistoni (Fruit fly).